A 382-amino-acid chain; its full sequence is ATP phosphoribosyltransferase regulatory subunit (382 aa).

The protein belongs to the class-II aminoacyl-tRNA synthetase family. HisZ subfamily. As to quaternary structure, heteromultimer composed of HisG and HisZ subunits.

Its subcellular location is the cytoplasm. It functions in the pathway amino-acid biosynthesis; L-histidine biosynthesis; L-histidine from 5-phospho-alpha-D-ribose 1-diphosphate: step 1/9. Required for the first step of histidine biosynthesis. May allow the feedback regulation of ATP phosphoribosyltransferase activity by histidine. In Lacticaseibacillus casei (strain BL23) (Lactobacillus casei), this protein is ATP phosphoribosyltransferase regulatory subunit.